An 893-amino-acid polypeptide reads, in one-letter code: Sulfate permease 2 (893 aa).

Residues 1–25 (MSREGYPNFEEVEIPDFQETNNTVP) are disordered. The Cytoplasmic portion of the chain corresponds to 1–131 (MSREGYPNFE…VFPIINWLPH (131 aa)). A helical transmembrane segment spans residues 132 to 152 (YNFSWFTADLIAGITIGCVLV). Over 153–163 (PQSMSYAQVAT) the chain is Extracellular. Residues 164–184 (LPAQYGLYSSFIGAYSYSFFA) traverse the membrane as a helical segment. At 185-188 (TSKD) the chain is on the cytoplasmic side. A helical transmembrane segment spans residues 189–209 (VCIGPVAVMSLQTAKVIADVT). The Extracellular segment spans residues 210–221 (AKYPDGDSAITG). A helical transmembrane segment spans residues 222–242 (PVIATTLALLCGIISAAVGFL). The Cytoplasmic portion of the chain corresponds to 243–244 (RL). A helical transmembrane segment spans residues 245 to 265 (GFLVELISLNAVAGFMTGSAF). The Extracellular portion of the chain corresponds to 266-305 (NILWGQVPALMGYNSLVNTRAATYKVVIETLKHLPDTKLD). The helical transmembrane segment at 306–326 (AVFGLIPLFLLYVWKWWCGTY) threads the bilayer. Topologically, residues 327–350 (GPRLNDRYNSKNPRLHKIIKWTYF) are cytoplasmic. A helical membrane pass occupies residues 351–371 (YAQASRNGIIIIVFTCIGWAI). Residues 372–399 (TRGKSKSERPISILGSVPSGLKEVGVFH) are Extracellular-facing. Residues 400 to 420 (VPPGLMSKLGPNLPASIIVLL) traverse the membrane as a helical segment. Residues 421–443 (LEHIAISKSFGRINDYKVVPDQE) lie on the Cytoplasmic side of the membrane. A helical transmembrane segment spans residues 444 to 464 (LIAIGVSNLLGTFFNAYPATG). The Extracellular portion of the chain corresponds to 465–483 (SFSRSALKAKCNVRTPLSG). Residues 484 to 504 (LFSGSCVLLALYCLTGAFFYI) form a helical membrane-spanning segment. The Cytoplasmic segment spans residues 505–532 (PKATLSAVIIHAVSDLLASYQTTWNFWK). A helical transmembrane segment spans residues 533-551 (MNPLDFICFIVTVLITVFA). Residues 552 to 559 (SIEDGIYF) lie on the Extracellular side of the membrane. The chain crosses the membrane as a helical span at residues 560-580 (AMCWSCAMLILKVAFPAGKFL). Over 581-893 (GRVEVAEVTD…DIPDFAKWDI (313 aa)) the chain is Cytoplasmic. Residues 676-854 (DVQILPPPDG…SIVAGHTSYH (179 aa)) form the STAS domain.

Belongs to the SLC26A/SulP transporter (TC 2.A.53) family.

It is found in the membrane. Functionally, high affinity uptake of sulfate into the cell. This Saccharomyces cerevisiae (strain ATCC 204508 / S288c) (Baker's yeast) protein is Sulfate permease 2 (SUL2).